The primary structure comprises 91 residues: Small ribosomal subunit protein uS19 (91 aa).

This sequence belongs to the universal ribosomal protein uS19 family.

Its function is as follows. Protein S19 forms a complex with S13 that binds strongly to the 16S ribosomal RNA. This chain is Small ribosomal subunit protein uS19, found in Verminephrobacter eiseniae (strain EF01-2).